Here is a 100-residue protein sequence, read N- to C-terminus: Integration host factor subunit beta (100 aa).

This sequence belongs to the bacterial histone-like protein family. In terms of assembly, heterodimer of an alpha and a beta chain.

This protein is one of the two subunits of integration host factor, a specific DNA-binding protein that functions in genetic recombination as well as in transcriptional and translational control. The protein is Integration host factor subunit beta of Agrobacterium fabrum (strain C58 / ATCC 33970) (Agrobacterium tumefaciens (strain C58)).